A 481-amino-acid polypeptide reads, in one-letter code: Glutamate--glyoxylate aminotransferase 2 (481 aa).

Lys-291 carries the post-translational modification N6-(pyridoxal phosphate)lysine. The Peroxisomal targeting signal motif lies at 479–481 (SRM).

The protein belongs to the class-I pyridoxal-phosphate-dependent aminotransferase family. Alanine aminotransferase subfamily. In terms of assembly, homodimer. Requires pyridoxal 5'-phosphate as cofactor. Post-translationally, the N-terminus is blocked. In terms of tissue distribution, expressed at low levels in seedlings, leaves, flowers, roots, and green siliques.

The protein resides in the peroxisome. The catalysed reaction is L-alanine + 2-oxoglutarate = pyruvate + L-glutamate. It carries out the reaction glyoxylate + L-alanine = glycine + pyruvate. The enzyme catalyses glycine + 2-oxoglutarate = glyoxylate + L-glutamate. It participates in photosynthesis; C4 acid pathway. It functions in the pathway amino-acid degradation; L-alanine degradation via transaminase pathway; pyruvate from L-alanine: step 1/1. In terms of biological role, catalyzes the Glu:glyoxylate aminotransferase (GGT), Ala:glyoxylate aminotransferase (AGT), Ala:2-oxoglutarate aminotransferase (AKT) and Glu:pyruvate aminotransferase (GPT) reactions in peroxisomes. The protein is Glutamate--glyoxylate aminotransferase 2 (GGAT2) of Arabidopsis thaliana (Mouse-ear cress).